Consider the following 417-residue polypeptide: Lipoyl synthase, mitochondrial (417 aa).

Positions 35–56 (EANPTDLAGLKRKAKRRPTKLA) are disordered. Over residues 44-53 (LKRKAKRRPT) the composition is skewed to basic residues. The [4Fe-4S] cluster site is built by Cys-122, Cys-127, Cys-133, Cys-152, Cys-156, Cys-159, and Ser-367. Residues 137–356 (KKSEATATIM…RDKALEMGFL (220 aa)) enclose the Radical SAM core domain. The disordered stretch occupies residues 389–417 (IEEQQHDKENNNLLLSKEDEKTTQEKANF). The segment covering 391-417 (EQQHDKENNNLLLSKEDEKTTQEKANF) has biased composition (basic and acidic residues).

The protein belongs to the radical SAM superfamily. Lipoyl synthase family. The cofactor is [4Fe-4S] cluster.

It localises to the mitochondrion. The enzyme catalyses [[Fe-S] cluster scaffold protein carrying a second [4Fe-4S](2+) cluster] + N(6)-octanoyl-L-lysyl-[protein] + 2 oxidized [2Fe-2S]-[ferredoxin] + 2 S-adenosyl-L-methionine + 4 H(+) = [[Fe-S] cluster scaffold protein] + N(6)-[(R)-dihydrolipoyl]-L-lysyl-[protein] + 4 Fe(3+) + 2 hydrogen sulfide + 2 5'-deoxyadenosine + 2 L-methionine + 2 reduced [2Fe-2S]-[ferredoxin]. The protein operates within protein modification; protein lipoylation via endogenous pathway; protein N(6)-(lipoyl)lysine from octanoyl-[acyl-carrier-protein]: step 2/2. Functionally, catalyzes the radical-mediated insertion of two sulfur atoms into the C-6 and C-8 positions of the octanoyl moiety bound to the lipoyl domains of lipoate-dependent enzymes, thereby converting the octanoylated domains into lipoylated derivatives. This is Lipoyl synthase, mitochondrial from Komagataella phaffii (strain GS115 / ATCC 20864) (Yeast).